We begin with the raw amino-acid sequence, 32 residues long: Yop proteins translocation protein A (32 aa).

This is Yop proteins translocation protein A (yscA) from Yersinia pestis.